Consider the following 310-residue polypeptide: Olfactory receptor 5AR1 (310 aa).

Residues 1-25 (MDKENHSVVTEFVFMGITQDPQLQI) are Extracellular-facing. N-linked (GlcNAc...) asparagine glycosylation is present at N5. The chain crosses the membrane as a helical span at residues 26 to 46 (IFFVVFLLVYLVNVIGNVGMI). Over 47 to 54 (ILIITDSQ) the chain is Cytoplasmic. The chain crosses the membrane as a helical span at residues 55–75 (LHTPMYFFLCNLSFVDLGYSS). Over 76 to 99 (AIAPRMLADFLTKHKVISFSSCAT) the chain is Extracellular. C97 and C189 are disulfide-bonded. A helical transmembrane segment spans residues 100 to 120 (QFAFFVGFVDAECYVLAAMAY). Residues 121 to 133 (DRFVAICRPLHYS) are Cytoplasmic-facing. A helical membrane pass occupies residues 134–154 (TLMSKKVCLVLMLGSYFAGLV). Residues 155-196 (SLVAHTSLTFSLSYCGSNIINHFFCEIPPLLALSCSDTYISE) lie on the Extracellular side of the membrane. A helical transmembrane segment spans residues 197-217 (ILLFSLCGFIEFSTILIIFIS). C203 is a binding site for Cu cation. Residues 218–237 (YAFILIAIIRIRSAEGRLKA) lie on the Cytoplasmic side of the membrane. The helical transmembrane segment at 238–258 (FSTCGSHLTGVTLFYGTVMFM) threads the bilayer. Cu cation-binding residues include M256 and R261. Residues 259 to 271 (YLRPTSSYSLDQD) are Extracellular-facing. A helical transmembrane segment spans residues 272–292 (KWASVFYTIIIPMLNPLIYSL). Residues 293-310 (RNKDVKAAFKKLIGKKPQ) are Cytoplasmic-facing.

The protein belongs to the G-protein coupled receptor 1 family.

The protein resides in the cell membrane. Copper binding enhances receptor activity in response to odorant binding. Its function is as follows. Olfactory receptor that is activated by the binding of organosulfur odorants with thioether groups such as (methylthio)methanethiol (MTMT). The activity of this receptor is mediated by G proteins which activate adenylyl cyclase. The chain is Olfactory receptor 5AR1 from Mus musculus (Mouse).